A 95-amino-acid polypeptide reads, in one-letter code: Large ribosomal subunit protein eL42 (95 aa).

Residues cysteine 11, cysteine 14, cysteine 71, and cysteine 74 each contribute to the Zn(2+) site. The C4-type zinc-finger motif lies at 11 to 74; that stretch reads CPRCNTHTEH…QVLVITCTVC (64 aa).

Belongs to the eukaryotic ribosomal protein eL42 family. As to quaternary structure, part of the 50S ribosomal subunit. Requires Zn(2+) as cofactor.

Its function is as follows. Binds to the 23S rRNA. In Aeropyrum pernix (strain ATCC 700893 / DSM 11879 / JCM 9820 / NBRC 100138 / K1), this protein is Large ribosomal subunit protein eL42.